Consider the following 478-residue polypeptide: MSSGTLYDKVWDLHRVADLPGGSTQLFVGLHLIHEVTSPQAFAALQDKGLPVRCPERTVATVDHIVPTISQKRPFADPLAEEMLSTLERNCANYGIVLCGLGSGRQGIVHVIAPELGLTQPGMTVACGDSHTSTHGAFGAIAFGIGTSQVRDVLASQSLAMNKLKVRRIWVDGQLGSGVYAKDLILHVIRSLGVKAGVGYAYEFAGPAIDVLSMEERMTLCNMAIEGGARCGYVNPDGVTFDYLQGRFYAPTGEALHRAVAWWRSLASDPNAVFDDEVTFDAASIAPMVTWGITPGQGIAVDESVPTADSLEPSERPISEEACRYMDLEPGMAIEGVPVDVCFIGSCTNGRLSDLKAAAAIAKGRHVAQGIKAFVVPGSEQVARAAEAEGLDGVFRKAGFEWREPGCSMCLAMNPDRLEGRQISASSSNRNFKGRQGSSRGRTLLMSPAMVAAAAITGQVTDVRKLISNTVPSKSFHQ.

[4Fe-4S] cluster-binding residues include cysteine 347, cysteine 407, and cysteine 410.

The protein belongs to the aconitase/IPM isomerase family. LeuC type 1 subfamily. As to quaternary structure, heterodimer of LeuC and LeuD. [4Fe-4S] cluster serves as cofactor.

It carries out the reaction (2R,3S)-3-isopropylmalate = (2S)-2-isopropylmalate. It participates in amino-acid biosynthesis; L-leucine biosynthesis; L-leucine from 3-methyl-2-oxobutanoate: step 2/4. Catalyzes the isomerization between 2-isopropylmalate and 3-isopropylmalate, via the formation of 2-isopropylmaleate. The protein is 3-isopropylmalate dehydratase large subunit of Prochlorococcus marinus (strain MIT 9313).